The following is a 374-amino-acid chain: MEILRIEPTPSPNTMKVVLSYTREDKLSNTYKKVEETQPRFINQLLSIDGITSIFHVMNFLAVDKAPKADWEVILPDIKAAFSDANKVLESVNEPQIDNHFGEIKAELLTFKGIPYQIKLTSADQELREQLPQTYVDHMTQAQTAHDNIVFMRKWLDLGNRYGNIQEVMDGVLEEVLTTYPESQLPVLVKHALEENHATNNYHFYRHVSLDEYHATDNWKTRLRMLNHFPKPTFEDIPLLDLALSDEKVPVRRQAIVLLGMIESKEILPYLYKGLRDKSPVVRRTAGDCISDLGYPEALPEMVLLLDDPQKIVRWRAAMFIFDEGNAEQLPALKAHINDNAFEVKLQIEMAISRIENGDEALGSVWKQMANRTI.

This sequence belongs to the CvfC family.

Functionally, required for hemolysin production. The chain is Conserved virulence factor C (cvfC) from Staphylococcus aureus (strain USA300).